Here is a 203-residue protein sequence, read N- to C-terminus: Adenylyl-sulfate kinase (203 aa).

An ATP-binding site is contributed by 35–42; the sequence is GLSGSGKS. Catalysis depends on S109, which acts as the Phosphoserine intermediate.

The protein belongs to the APS kinase family.

The catalysed reaction is adenosine 5'-phosphosulfate + ATP = 3'-phosphoadenylyl sulfate + ADP + H(+). It functions in the pathway sulfur metabolism; hydrogen sulfide biosynthesis; sulfite from sulfate: step 2/3. Catalyzes the synthesis of activated sulfate. This Geotalea daltonii (strain DSM 22248 / JCM 15807 / FRC-32) (Geobacter daltonii) protein is Adenylyl-sulfate kinase.